The chain runs to 412 residues: Adenosine receptor A2a (412 aa).

Topologically, residues 1–7 (MPTVGSL) are extracellular. A helical membrane pass occupies residues 8 to 32 (VYIMVELAIALLAILGNMLVCWAVW). The Cytoplasmic portion of the chain corresponds to 33 to 42 (LNSNLQNVTN). The chain crosses the membrane as a helical span at residues 43–66 (YFVVSLAAADIAVGVLAIPFAITI). Topologically, residues 67 to 77 (STGFCAACHGC) are extracellular. 3 cysteine pairs are disulfide-bonded: Cys-71-Cys-159, Cys-74-Cys-146, and Cys-77-Cys-166. The helical transmembrane segment at 78-100 (LFIACFVLVLTQSSIFSLLAIAI) threads the bilayer. Topologically, residues 101–120 (DRYIAIRIPLRYNGLVTGTR) are cytoplasmic. A helical transmembrane segment spans residues 121-143 (AKGVIAVCWVLSFAIGLTPMLGW). Topologically, residues 144–173 (NNCHHWGEGENQSQGCGEGQVACLFEDVVP) are extracellular. Residue Asn-154 is glycosylated (N-linked (GlcNAc...) asparagine). An adenosine-binding site is contributed by Glu-169. A helical membrane pass occupies residues 174–198 (MNYMVYYNFFACVLVPLLLMLGVYL). At 199-234 (RIFLAARRQLKQMETQPLPGERARSTLQKEVHAAKS) the chain is on the cytoplasmic side. Residues 235–258 (LAIIVGLFALCWLPLHIINCFTFF) traverse the membrane as a helical segment. Asn-253 contacts adenosine. Residues Cys-259 and Cys-262 are joined by a disulfide bond. Over 259-266 (CPECPHAP) the chain is Extracellular. Residues 267–290 (LWLMYPAIILSHFNSVVNPFIYAY) traverse the membrane as a helical segment. 2 residues coordinate adenosine: Ser-277 and His-278. Residues 291-412 (RIREFRHTFH…PLAQDGAGVS (122 aa)) are Cytoplasmic-facing. The disordered stretch occupies residues 368-412 (RASARESPGDTGLPDVELLSHELHGASPESPGLEGPLAQDGAGVS).

This sequence belongs to the G-protein coupled receptor 1 family. In terms of assembly, interacts (via cytoplasmic C-terminal domain) with USP4; the interaction is direct. May interact with DRD4. Interacts with NECAB2. Interacts (via cytoplasmic C-terminal domain) with GAS2L2; interaction enhances receptor-mediated adenylyl cyclase activity. Ubiquitinated. Deubiquitinated by USP4; leading to stabilization and expression at the cell surface.

It is found in the cell membrane. In terms of biological role, receptor for adenosine. The activity of this receptor is mediated by G proteins which activate adenylyl cyclase. The chain is Adenosine receptor A2a (ADORA2A) from Equus caballus (Horse).